We begin with the raw amino-acid sequence, 190 residues long: Threonylcarbamoyl-AMP synthase (190 aa).

The YrdC-like domain maps to 7 to 190 (TGSIAAAVDL…ALTGELFRQG (184 aa)).

The protein belongs to the SUA5 family. TsaC subfamily.

Its subcellular location is the cytoplasm. The enzyme catalyses L-threonine + hydrogencarbonate + ATP = L-threonylcarbamoyladenylate + diphosphate + H2O. Its function is as follows. Required for the formation of a threonylcarbamoyl group on adenosine at position 37 (t(6)A37) in tRNAs that read codons beginning with adenine. Catalyzes the conversion of L-threonine, HCO(3)(-)/CO(2) and ATP to give threonylcarbamoyl-AMP (TC-AMP) as the acyladenylate intermediate, with the release of diphosphate. The sequence is that of Threonylcarbamoyl-AMP synthase from Salmonella arizonae (strain ATCC BAA-731 / CDC346-86 / RSK2980).